Consider the following 997-residue polypeptide: Protein HIR2 (997 aa).

WD repeat units follow at residues 10-48 (GISG…DTAF), 117-152 (VSQS…TRSA), 153-194 (NKKE…VVYH), 274-319 (VHSP…PLFA), and 323-362 (ISDS…LGKT). The segment at 408 to 584 (ADNSSNILST…RKPKEDALGN (177 aa)) is disordered. Residues 409 to 446 (DNSSNILSTDTNTNEKNLSTVNTTEPQTNSQSSSYNNK) are compositionally biased toward polar residues. Positions 464-480 (SDEKAKNLEARPIEAKS) are enriched in basic and acidic residues. Polar residues predominate over residues 491–501 (SKSSSVTTSDN). A compositionally biased stretch (basic and acidic residues) spans 518–538 (TEKKTKPDKKSIKSENGESKV). Polar residues predominate over residues 539 to 567 (NKAQNTISPKESNTTDNKSTTPDFKNPSY). 2 WD repeats span residues 665–706 (LFQD…IIPP) and 708–745 (TIGV…LEFP).

The protein belongs to the WD repeat HIR1 family.

The protein resides in the nucleus. Required for replication-independent chromatin assembly and for the periodic repression of histone gene transcription during the cell cycle. The polypeptide is Protein HIR2 (HIR2) (Candida glabrata (strain ATCC 2001 / BCRC 20586 / JCM 3761 / NBRC 0622 / NRRL Y-65 / CBS 138) (Yeast)).